The chain runs to 1500 residues: Alpha-1-macroglobulin (1500 aa).

The signal sequence occupies residues 1 to 24 (MRRNQLPIPVFLLLLLLLPRDATA). Cys-48 and Cys-86 are oxidised to a cystine. N-linked (GlcNAc...) asparagine glycosylation is found at Asn-55, Asn-61, and Asn-157. 2 cysteine pairs are disulfide-bonded: Cys-249–Cys-298 and Cys-267–Cys-286. 2 N-linked (GlcNAc...) asparagine glycosylation sites follow: Asn-382 and Asn-412. Residues Cys-469 and Cys-562 are joined by a disulfide bond. Residue Asn-568 is glycosylated (N-linked (GlcNAc...) asparagine). 6 disulfides stabilise this stretch: Cys-594-Cys-785, Cys-642-Cys-689, Cys-835-Cys-863, Cys-861-Cys-897, Cys-935-Cys-1344, and Cys-1094-Cys-1142. The bait region stretch occupies residues 686–746 (PRYCPMYQAY…QEVEVRETVR (61 aa)). Asn-883 and Asn-944 each carry an N-linked (GlcNAc...) asparagine glycan. The segment at residues 986-989 (CGEQ) is a cross-link (isoglutamyl cysteine thioester (Cys-Gln)). Residue Asn-1005 is glycosylated (N-linked (GlcNAc...) asparagine). The tract at residues 1360 to 1500 (EGEAPFTLKV…FSSDSEQGNA (141 aa)) is receptor-binding domain. Asn-1390 and Asn-1448 each carry an N-linked (GlcNAc...) asparagine glycan.

This sequence belongs to the protease inhibitor I39 (alpha-2-macroglobulin) family. As to quaternary structure, homotetramer; disulfide-linked. In terms of tissue distribution, widely expressed. Highest level in ovary, testis, uterus and prostate. Protein found in plasma.

The protein localises to the secreted. Its function is as follows. Is able to inhibit all four classes of proteinases by a unique 'trapping' mechanism. This protein has a peptide stretch, called the 'bait region' which contains specific cleavage sites for different proteinases. When a proteinase cleaves the bait region, a conformational change is induced in the protein which traps the proteinase. The entrapped enzyme remains active against low molecular weight substrates (activity against high molecular weight substrates is greatly reduced). Following cleavage in the bait region a thioester bond is hydrolyzed and mediates the covalent binding of the protein to the proteinase. This is Alpha-1-macroglobulin from Rattus norvegicus (Rat).